We begin with the raw amino-acid sequence, 431 residues long: Peptidase B (431 aa).

Residues K196 and D201 each coordinate Mn(2+). K208 is a catalytic residue. The Mn(2+) site is built by D219, D278, and E280. R282 is a catalytic residue.

This sequence belongs to the peptidase M17 family. In terms of assembly, homohexamer. The cofactor is Mn(2+).

It is found in the cytoplasm. The catalysed reaction is Release of an N-terminal amino acid, Xaa, from a peptide or arylamide. Xaa is preferably Glu or Asp but may be other amino acids, including Leu, Met, His, Cys and Gln.. Probably plays an important role in intracellular peptide degradation. This chain is Peptidase B, found in Photorhabdus laumondii subsp. laumondii (strain DSM 15139 / CIP 105565 / TT01) (Photorhabdus luminescens subsp. laumondii).